The primary structure comprises 885 residues: Conidiophore development regulator abaA (885 aa).

Positions 1–20 (MSSLFQPRPVLSSQRYSQSP) are enriched in polar residues. Residues 1 to 25 (MSSLFQPRPVLSSQRYSQSPDYVDT) are disordered. Positions 124–217 (QKDKGGVWRR…QVVKKFFEDL (94 aa)) form a DNA-binding region, TEA. Disordered regions lie at residues 502 to 539 (KEKRRKYADGDGKKELERAGSKRKRSEDEGDAASWTRR) and 817 to 885 (APGS…TAGW). Composition is skewed to basic and acidic residues over residues 508-521 (YADGDGKKELERAG) and 831-840 (VESHAGDHHG).

Belongs to the TEC1 family.

It localises to the nucleus. In terms of biological role, brlA, abaA and wetA are pivotal regulators of conidiophore development and conidium maturation. They act individually and together to regulate their own expression and that of numerous other sporulation-specific genes. BrlA, abaA and wetA act together to positively regulate the expression of the Pks1 gene cluster that mediates the biosynthesis of an anthraquinone derivative pigment that contributes to conidial pigmentation that provides protection from UV radiation, heat and cold stress. In Metarhizium robertsii (strain ARSEF 23 / ATCC MYA-3075) (Metarhizium anisopliae (strain ARSEF 23)), this protein is Conidiophore development regulator abaA.